An 831-amino-acid chain; its full sequence is Periplasmic nitrate reductase (831 aa).

Residues 1 to 29 (MKFTRREFMKAQAAASAAAVAGIALPATA) constitute a signal peptide (tat-type signal). The 57-residue stretch at 41-97 (IKWEKAPCRFCGTGCSVLVGTQHGRVVATQGDPESPVNKGLNCVKGYFLSKIMYGKD) folds into the 4Fe-4S Mo/W bis-MGD-type domain. The [4Fe-4S] cluster site is built by Cys48, Cys51, Cys55, and Cys83. Mo-bis(molybdopterin guanine dinucleotide)-binding positions include Lys85, Gln152, Asn177, Cys181, 214-221 (WGSNMAEM), 245-249 (STYTH), 264-266 (QSD), Met374, Gln378, Asn484, 510-511 (SD), Lys533, Asp560, and 720-729 (TGRVLEHWHS). Trp796 is a binding site for substrate. Asn804 and Lys821 together coordinate Mo-bis(molybdopterin guanine dinucleotide).

Belongs to the prokaryotic molybdopterin-containing oxidoreductase family. NasA/NapA/NarB subfamily. As to quaternary structure, component of the periplasmic nitrate reductase NapAB complex composed of NapA and NapB. [4Fe-4S] cluster serves as cofactor. The cofactor is Mo-bis(molybdopterin guanine dinucleotide). In terms of processing, predicted to be exported by the Tat system. The position of the signal peptide cleavage has not been experimentally proven.

The protein localises to the periplasm. It carries out the reaction 2 Fe(II)-[cytochrome] + nitrate + 2 H(+) = 2 Fe(III)-[cytochrome] + nitrite + H2O. Catalytic subunit of the periplasmic nitrate reductase complex NapAB. Receives electrons from NapB and catalyzes the reduction of nitrate to nitrite. The protein is Periplasmic nitrate reductase of Psychromonas ingrahamii (strain DSM 17664 / CCUG 51855 / 37).